Consider the following 325-residue polypeptide: MTEVLLEDLDHVGPATAQKLKDAGFTTIEAIAVASPAELANSAEIGESTAAKIINAARQSADIGGFETGDLVLERRKLVGKLSTGCTEFDEMMGGGIETQSITEMYGEFGSGKTQIAHQLAVNVQLPPEQGGLGGSVIMIDTENTFRPERIAQMVKGISDKHGIEYDPEEFLKNIHVARAFNSNHQILLVDSANELANELKNTEMPVKLLIVDSLTAHFRAEYIGRGTLADRQQKLNKHLHEILRFGDLSNACVVVTNQVMSKPDAFFGDPTKPIGGHILGHTATFRLYIRKSKGEKRIVKLVDSPNLPDGEALISVTTDGIGDA.

ATP is bound at residue glycine 107 to threonine 114.

Belongs to the eukaryotic RecA-like protein family.

In terms of biological role, involved in DNA repair and in homologous recombination. Binds and assemble on single-stranded DNA to form a nucleoprotein filament. Hydrolyzes ATP in a ssDNA-dependent manner and promotes DNA strand exchange between homologous DNA molecules. The sequence is that of DNA repair and recombination protein RadA from Methanococcoides burtonii (strain DSM 6242 / NBRC 107633 / OCM 468 / ACE-M).